Here is a 253-residue protein sequence, read N- to C-terminus: 5'-nucleotidase SurE (253 aa).

Positions 8, 9, 39, and 95 each coordinate a divalent metal cation.

It belongs to the SurE nucleotidase family. A divalent metal cation is required as a cofactor.

Its subcellular location is the cytoplasm. The catalysed reaction is a ribonucleoside 5'-phosphate + H2O = a ribonucleoside + phosphate. Nucleotidase that shows phosphatase activity on nucleoside 5'-monophosphates. In Desulfatibacillum aliphaticivorans, this protein is 5'-nucleotidase SurE.